The chain runs to 156 residues: Small ribosomal subunit protein uS7 (156 aa).

It belongs to the universal ribosomal protein uS7 family. Part of the 30S ribosomal subunit. Contacts proteins S9 and S11.

In terms of biological role, one of the primary rRNA binding proteins, it binds directly to 16S rRNA where it nucleates assembly of the head domain of the 30S subunit. Is located at the subunit interface close to the decoding center, probably blocks exit of the E-site tRNA. The polypeptide is Small ribosomal subunit protein uS7 (Cellvibrio japonicus (strain Ueda107) (Pseudomonas fluorescens subsp. cellulosa)).